The following is a 358-amino-acid chain: Biotin synthase (358 aa).

In terms of domain architecture, Radical SAM core spans 50–277 (NEVQVSTLCS…KSHVRLSAGR (228 aa)). [4Fe-4S] cluster contacts are provided by cysteine 65, cysteine 69, and cysteine 72. 4 residues coordinate [2Fe-2S] cluster: cysteine 109, cysteine 140, cysteine 200, and arginine 272.

It belongs to the radical SAM superfamily. Biotin synthase family. As to quaternary structure, homodimer. It depends on [4Fe-4S] cluster as a cofactor. Requires [2Fe-2S] cluster as cofactor.

It carries out the reaction (4R,5S)-dethiobiotin + (sulfur carrier)-SH + 2 reduced [2Fe-2S]-[ferredoxin] + 2 S-adenosyl-L-methionine = (sulfur carrier)-H + biotin + 2 5'-deoxyadenosine + 2 L-methionine + 2 oxidized [2Fe-2S]-[ferredoxin]. The protein operates within cofactor biosynthesis; biotin biosynthesis; biotin from 7,8-diaminononanoate: step 2/2. Functionally, catalyzes the conversion of dethiobiotin (DTB) to biotin by the insertion of a sulfur atom into dethiobiotin via a radical-based mechanism. The sequence is that of Biotin synthase from Cellvibrio japonicus (strain Ueda107) (Pseudomonas fluorescens subsp. cellulosa).